Consider the following 219-residue polypeptide: uncharacterized protein (219 aa).

2 consecutive transmembrane segments (helical) span residues 81–101 (VVKWFIIVDPLINSILINYLI) and 168–188 (PIMEIQMVAVPLALPSPTALV).

It localises to the membrane. This is an uncharacterized protein from Saccharomyces cerevisiae (strain ATCC 204508 / S288c) (Baker's yeast).